A 184-amino-acid polypeptide reads, in one-letter code: Cytochrome c homolog (184 aa).

At 1–10 the chain is on the cytoplasmic side; sequence MDSFELNKIL. A helical; Signal-anchor transmembrane segment spans residues 11–31; it reads GAVLGTCLILLVTSFTANALF. Topologically, residues 32-184 are periplasmic; it reads SPKMPEKPGF…HPKPLPTASK (153 aa). Positions 84, 87, 88, and 151 each coordinate heme c.

This sequence belongs to the cytochrome c family. In terms of processing, binds 1 heme c group covalently per subunit.

The protein localises to the cell membrane. May be involved in electron transfer from bc1 complex to aa3. The protein is Cytochrome c homolog (cycM) of Bradyrhizobium diazoefficiens (strain JCM 10833 / BCRC 13528 / IAM 13628 / NBRC 14792 / USDA 110).